The chain runs to 137 residues: MVASYEIEFIGEGEVAGILREALRTDSRVESFEEFERGFKLRLVGAKRRITIVCKGSVQSDDCLLIVNARKMPENGGIALNADKIAERCGSKPEIAMLGAIAKLGVVDLKRLMSVIYREMGYGDVLAVKKGFEATNI.

This is an uncharacterized protein from Archaeoglobus fulgidus (strain ATCC 49558 / DSM 4304 / JCM 9628 / NBRC 100126 / VC-16).